Consider the following 376-residue polypeptide: Ribonucleoside-diphosphate reductase subunit beta (376 aa).

Positions 85, 116, and 119 each coordinate Fe cation. Residue Tyr-123 is part of the active site. Fe cation is bound by residues Glu-205, Glu-239, and His-242.

It belongs to the ribonucleoside diphosphate reductase small chain family. In terms of assembly, tetramer of two alpha and two beta subunits. Fe cation serves as cofactor.

The catalysed reaction is a 2'-deoxyribonucleoside 5'-diphosphate + [thioredoxin]-disulfide + H2O = a ribonucleoside 5'-diphosphate + [thioredoxin]-dithiol. In terms of biological role, provides the precursors necessary for DNA synthesis. Catalyzes the biosynthesis of deoxyribonucleotides from the corresponding ribonucleotides. In Buchnera aphidicola subsp. Baizongia pistaciae (strain Bp), this protein is Ribonucleoside-diphosphate reductase subunit beta (nrdB).